Consider the following 260-residue polypeptide: Large ribosomal subunit protein uL2y (260 aa).

The disordered stretch occupies residues 227 to 248 (RRDKSAGAKVGQIAARRTGRRR).

It belongs to the universal ribosomal protein uL2 family.

The polypeptide is Large ribosomal subunit protein uL2y (RPL8B) (Arabidopsis thaliana (Mouse-ear cress)).